The sequence spans 316 residues: Aspartate carbamoyltransferase catalytic subunit (316 aa).

Residues Arg56 and Thr57 each contribute to the carbamoyl phosphate site. Residue Lys84 participates in L-aspartate binding. Residues Arg106, His139, and Gln142 each coordinate carbamoyl phosphate. 2 residues coordinate L-aspartate: Arg172 and Arg226. Residues Gly267 and Pro268 each contribute to the carbamoyl phosphate site.

The protein belongs to the aspartate/ornithine carbamoyltransferase superfamily. ATCase family. In terms of assembly, heterododecamer (2C3:3R2) of six catalytic PyrB chains organized as two trimers (C3), and six regulatory PyrI chains organized as three dimers (R2).

It catalyses the reaction carbamoyl phosphate + L-aspartate = N-carbamoyl-L-aspartate + phosphate + H(+). It participates in pyrimidine metabolism; UMP biosynthesis via de novo pathway; (S)-dihydroorotate from bicarbonate: step 2/3. Its function is as follows. Catalyzes the condensation of carbamoyl phosphate and aspartate to form carbamoyl aspartate and inorganic phosphate, the committed step in the de novo pyrimidine nucleotide biosynthesis pathway. This chain is Aspartate carbamoyltransferase catalytic subunit, found in Mycobacterium sp. (strain MCS).